The primary structure comprises 751 residues: Proton-associated sugar transporter A (751 aa).

6 consecutive transmembrane segments (helical) span residues 93–113 (ILFG…PVLL), 123–143 (SLVW…LGAW), 155–175 (RPFI…LLNG), 191–211 (WGIL…DSAD), 233–253 (IHAL…GIHW), and 268–288 (VIYV…LISI). At Thr500 the chain carries Phosphothreonine. The next 6 helical transmembrane spans lie at 536 to 556 (GWLS…EVVF), 576 to 596 (VTMG…YSAI), 606 to 626 (VRTL…LATL), 630 to 650 (LYVV…LCTL), 688 to 708 (FLAQ…VGSA), and 710 to 730 (GVMY…SLCV).

It belongs to the glycoside-pentoside-hexuronide (GPH) cation symporter transporter (TC 2.A.2) family.

The protein localises to the membrane. It carries out the reaction D-galactose(in) + H(+)(in) = D-galactose(out) + H(+)(out). The catalysed reaction is D-glucose(out) + H(+)(out) = D-glucose(in) + H(+)(in). Its function is as follows. Proton-associated glucose transporter in the brain. This chain is Proton-associated sugar transporter A, found in Mus musculus (Mouse).